The following is a 367-amino-acid chain: Carbamoyl phosphate synthase small chain (367 aa).

Residues 1–182 are CPSase; it reads MKLENKKGYL…PIFHPNTGDM (182 aa). L-glutamine is bound by residues S50, G230, and G232. The 186-residue stretch at 182-367 folds into the Glutamine amidotransferase type-1 domain; the sequence is MIVVVDCGIK…DKFRTMVTGK (186 aa). The active-site Nucleophile is the C258. Positions 259, 262, 300, 302, and 303 each coordinate L-glutamine. Active-site residues include H343 and E345.

It belongs to the CarA family. As to quaternary structure, composed of two chains; the small (or glutamine) chain promotes the hydrolysis of glutamine to ammonia, which is used by the large (or ammonia) chain to synthesize carbamoyl phosphate. Tetramer of heterodimers (alpha,beta)4.

It carries out the reaction hydrogencarbonate + L-glutamine + 2 ATP + H2O = carbamoyl phosphate + L-glutamate + 2 ADP + phosphate + 2 H(+). The enzyme catalyses L-glutamine + H2O = L-glutamate + NH4(+). Its pathway is amino-acid biosynthesis; L-arginine biosynthesis; carbamoyl phosphate from bicarbonate: step 1/1. It participates in pyrimidine metabolism; UMP biosynthesis via de novo pathway; (S)-dihydroorotate from bicarbonate: step 1/3. In terms of biological role, small subunit of the glutamine-dependent carbamoyl phosphate synthetase (CPSase). CPSase catalyzes the formation of carbamoyl phosphate from the ammonia moiety of glutamine, carbonate, and phosphate donated by ATP, constituting the first step of 2 biosynthetic pathways, one leading to arginine and/or urea and the other to pyrimidine nucleotides. The small subunit (glutamine amidotransferase) binds and cleaves glutamine to supply the large subunit with the substrate ammonia. The sequence is that of Carbamoyl phosphate synthase small chain from Saccharolobus solfataricus (strain ATCC 35092 / DSM 1617 / JCM 11322 / P2) (Sulfolobus solfataricus).